Here is a 414-residue protein sequence, read N- to C-terminus: Na(+)-translocating NADH-quinone reductase subunit B (414 aa).

4 helical membrane-spanning segments follow: residues 56–76 (IMIMVWLAVFPAMFWGMYNVG), 82–104 (ALNHLYSGAELATVISGNWHYWL), 129–149 (FLPIYATVFLVGGFWEVLFCM), and 164–184 (ILFALIVPPTLPLWQAALGIT). The residue at position 236 (Thr-236) is an FMN phosphoryl threonine. Helical transmembrane passes span 275 to 295 (VSTLALAIGAAFIVYMGIASW), 297 to 317 (IIAGVMVGMIAISTLFNVIGS), 325 to 345 (MPWHWHLVLGGFAFGMFFMAT), 358 to 378 (WAYGILIGAMCVMIRVVNPAY), and 381 to 401 (GMMLAILFANLFAPLFDHIVI).

The protein belongs to the NqrB/RnfD family. In terms of assembly, composed of six subunits; NqrA, NqrB, NqrC, NqrD, NqrE and NqrF. The cofactor is FMN.

It localises to the cell inner membrane. It catalyses the reaction a ubiquinone + n Na(+)(in) + NADH + H(+) = a ubiquinol + n Na(+)(out) + NAD(+). NQR complex catalyzes the reduction of ubiquinone-1 to ubiquinol by two successive reactions, coupled with the transport of Na(+) ions from the cytoplasm to the periplasm. NqrA to NqrE are probably involved in the second step, the conversion of ubisemiquinone to ubiquinol. The polypeptide is Na(+)-translocating NADH-quinone reductase subunit B (Vibrio anguillarum (Listonella anguillarum)).